Reading from the N-terminus, the 308-residue chain is Testis-specific Y-encoded protein 1 (308 aa).

This sequence belongs to the nucleosome assembly protein (NAP) family. Phosphorylated. As to expression, specifically expressed in testicular tissues. Isoform 1 and isoform 2 are expressed in spermatogonia and spermatocytes. Found in early testicular carcinoma in situ, spermatogonial cells in testicular tissues of 46,X,Y female and in prostate cancer cell lines.

It is found in the cytoplasm. The protein localises to the nucleus. Functionally, may be involved in sperm differentiation and proliferation. This chain is Testis-specific Y-encoded protein 1 (TSPY1), found in Homo sapiens (Human).